Here is a 394-residue protein sequence, read N- to C-terminus: Elongation factor Tu (394 aa).

In terms of domain architecture, tr-type G spans 10 to 204; that stretch reads KPHINVGTIG…FLDSYIPEPK (195 aa). Positions 19-26 are G1; the sequence is GHVDHGKT. 19-26 provides a ligand contact to GTP; sequence GHVDHGKT. T26 is a binding site for Mg(2+). Residues 60 to 64 form a G2 region; sequence GITIN. The tract at residues 81–84 is G3; that stretch reads DCPG. Residues 81-85 and 136-139 each bind GTP; these read DCPGH and NKCD. The interval 136-139 is G4; that stretch reads NKCD. Residues 174–176 are G5; the sequence is SAL.

This sequence belongs to the TRAFAC class translation factor GTPase superfamily. Classic translation factor GTPase family. EF-Tu/EF-1A subfamily. As to quaternary structure, monomer.

It localises to the cytoplasm. The enzyme catalyses GTP + H2O = GDP + phosphate + H(+). GTP hydrolase that promotes the GTP-dependent binding of aminoacyl-tRNA to the A-site of ribosomes during protein biosynthesis. This Buchnera aphidicola subsp. Acyrthosiphon pisum (strain 5A) protein is Elongation factor Tu.